Consider the following 820-residue polypeptide: DNA mismatch repair protein MutS (820 aa).

618-625 (GPNMAGKS) contributes to the ATP binding site.

It belongs to the DNA mismatch repair MutS family.

Functionally, this protein is involved in the repair of mismatches in DNA. It is possible that it carries out the mismatch recognition step. This protein has a weak ATPase activity. The sequence is that of DNA mismatch repair protein MutS from Chlamydia trachomatis serovar L2b (strain UCH-1/proctitis).